The following is a 96-amino-acid chain: MELMKMTLYTTFMITIIALSLQQKHLMLALMCVETMMLIVFTMLVMFNSNSLTVSQTPMPIILLTISVCGAAVGLSLVVAITRTHGNDFLKNLNLL.

3 consecutive transmembrane segments (helical) span residues 1–21 (MELMKMTLYTTFMITIIALSL), 27–47 (MLALMCVETMMLIVFTMLVMF), and 61–81 (IILLTISVCGAAVGLSLVVAI).

Belongs to the complex I subunit 4L family.

The protein localises to the mitochondrion membrane. The enzyme catalyses a ubiquinone + NADH + 5 H(+)(in) = a ubiquinol + NAD(+) + 4 H(+)(out). In terms of biological role, core subunit of the mitochondrial membrane respiratory chain NADH dehydrogenase (Complex I) which catalyzes electron transfer from NADH through the respiratory chain, using ubiquinone as an electron acceptor. Part of the enzyme membrane arm which is embedded in the lipid bilayer and involved in proton translocation. The polypeptide is NADH-ubiquinone oxidoreductase chain 4L (MT-ND4L) (Lycodon semicarinatus (Ryukyu odd-tooth snake)).